The primary structure comprises 213 residues: Probable transaldolase (213 aa).

K83 functions as the Schiff-base intermediate with substrate in the catalytic mechanism.

This sequence belongs to the transaldolase family. Type 3B subfamily.

The protein localises to the cytoplasm. It carries out the reaction D-sedoheptulose 7-phosphate + D-glyceraldehyde 3-phosphate = D-erythrose 4-phosphate + beta-D-fructose 6-phosphate. The protein operates within carbohydrate degradation; pentose phosphate pathway; D-glyceraldehyde 3-phosphate and beta-D-fructose 6-phosphate from D-ribose 5-phosphate and D-xylulose 5-phosphate (non-oxidative stage): step 2/3. Its function is as follows. Transaldolase is important for the balance of metabolites in the pentose-phosphate pathway. The polypeptide is Probable transaldolase (Syntrophomonas wolfei subsp. wolfei (strain DSM 2245B / Goettingen)).